The following is a 311-amino-acid chain: Phospholipid phosphatase 3 (311 aa).

Over 1–33 (MQNYKYDKAIVPESKNGGSPALNNNPRRSGSKR) the chain is Cytoplasmic. Ser-19 is subject to Phosphoserine. The chain crosses the membrane as a helical span at residues 34 to 54 (VLLICLDLFCLFMAGLPFLII). Residues 55–85 (ETSTIKPYHRGFYCNDESIKYPLKTGETIND) lie on the Extracellular side of the membrane. A helical transmembrane segment spans residues 86–106 (AVLCAVGIVIAILAIITGEFY). Topologically, residues 107–122 (RIYYLKKSRSTIQNPY) are cytoplasmic. The Dityrosine basolateral targeting motif signature appears at 109 to 110 (YY). A helical transmembrane segment spans residues 123–143 (VAALYKQVGCFLFGCAISQSF). Residues 144 to 193 (TDIAKVSIGRLRPHFLSVCNPDFSQINCSEGYIQNYRCRGDDSKVQEARK) are Extracellular-facing. The segment at 148–156 (KVSIGRLRP) is phosphatase sequence motif I. Residue Asn-170 is glycosylated (N-linked (GlcNAc...) asparagine). An Integrin-binding motif motif is present at residues 182 to 184 (RGD). The chain crosses the membrane as a helical span at residues 194 to 214 (SFFSGHASFSMYTMLYLVLYL). Residues 196 to 199 (FSGH) form a phosphatase sequence motif II region. The active-site Proton donors is the His-199. Residues 215–225 (QARFTWRGARL) lie on the Cytoplasmic side of the membrane. A helical membrane pass occupies residues 226 to 243 (LRPLLQFTLIMMAFYTGL). The phosphatase sequence motif III stretch occupies residues 244–255 (SRVSDHKHHPSD). Over 244-257 (SRVSDHKHHPSDVL) the chain is Extracellular. His-251 serves as the catalytic Nucleophile. A helical transmembrane segment spans residues 258–278 (AGFAQGALVACCIVFFVSDLF). Positions 275-311 (SDLFKTKTTLSLPAPAIRKEILSPVDIIDRNNHHNMM) are mediates interaction with CTNND1. The Cytoplasmic segment spans residues 279–311 (KTKTTLSLPAPAIRKEILSPVDIIDRNNHHNMM).

Belongs to the PA-phosphatase related phosphoesterase family. In terms of assembly, forms functional homodimers and homooligomers that are not required for substrate recognition and catalytic activity. Can also form heterooligomers with other PLPP2 and PLPP3. Interacts with CTNND1; negatively regulates the PLPP3-mediated stabilization of beta-catenin/CTNNB1. N-glycosylated. Contains high-mannose oligosaccharides. In terms of tissue distribution, ubiquitously expressed. Highly expressed in heart and placenta.

It is found in the cell membrane. The protein resides in the basolateral cell membrane. The protein localises to the endoplasmic reticulum membrane. It localises to the endoplasmic reticulum-Golgi intermediate compartment membrane. Its subcellular location is the golgi apparatus membrane. It is found in the golgi apparatus. The protein resides in the trans-Golgi network membrane. The protein localises to the membrane raft. The enzyme catalyses a 1,2-diacyl-sn-glycero-3-phosphate + H2O = a 1,2-diacyl-sn-glycerol + phosphate. It catalyses the reaction 1,2-dihexadecanoyl-sn-glycero-3-phosphate + H2O = 1,2-dihexadecanoyl-sn-glycerol + phosphate. The catalysed reaction is 1,2-di-(9Z-octadecenoyl)-sn-glycero-3-phosphate + H2O = 1,2-di-(9Z-octadecenoyl)-sn-glycerol + phosphate. It carries out the reaction a monoacyl-sn-glycero-3-phosphate + H2O = a monoacylglycerol + phosphate. The enzyme catalyses (9Z)-octadecenoyl-sn-glycero-3-phosphate + H2O = (9Z-octadecenoyl)-glycerol + phosphate. It catalyses the reaction sphing-4-enine 1-phosphate + H2O = sphing-4-enine + phosphate. The catalysed reaction is an N-acylsphing-4-enine 1-phosphate + H2O = an N-acylsphing-4-enine + phosphate. It carries out the reaction N-(octanoyl)-sphing-4-enine-1-phosphate + H2O = N-octanoylsphing-4-enine + phosphate. The enzyme catalyses N-(9Z-octadecenoyl)-ethanolamine phosphate + H2O = N-(9Z-octadecenoyl) ethanolamine + phosphate. Its pathway is lipid metabolism; phospholipid metabolism. With respect to regulation, magnesium-independent phospholipid phosphatase. Insensitive to N-ethylmaleimide. Inhibited by sphingosine, zinc ions and modestly by propanolol. Functionally, magnesium-independent phospholipid phosphatase of the plasma membrane that catalyzes the dephosphorylation of a variety of glycerolipid and sphingolipid phosphate esters including phosphatidate/PA, lysophosphatidate/LPA, diacylglycerol pyrophosphate/DGPP, sphingosine 1-phosphate/S1P and ceramide 1-phosphate/C1P. Also acts on N-oleoyl ethanolamine phosphate/N-(9Z-octadecenoyl)-ethanolamine phosphate, a potential physiological compound. Has both an extracellular and an intracellular phosphatase activity, allowing the hydrolysis and the cellular uptake of these bioactive lipid mediators from the milieu, regulating signal transduction in different cellular processes. Through the dephosphorylation of extracellular sphingosine-1-phosphate and the regulation of its extra- and intracellular availability, plays a role in vascular homeostasis, regulating endothelial cell migration, adhesion, survival, proliferation and the production of pro-inflammatory cytokines. By maintaining the appropriate levels of this lipid in the cerebellum, also ensure its proper development and function. Through its intracellular lipid phosphatase activity may act in early compartments of the secretory pathway, regulating the formation of Golgi to endoplasmic reticulum retrograde transport carriers. Its function is as follows. Independently of this phosphatase activity may also function in the Wnt signaling pathway and the stabilization of beta-catenin/CTNNB1, thereby regulating cell proliferation, migration and differentiation in angiogenesis or yet in tumor growth. Also plays a role in integrin-mediated cell-cell adhesion in angiogenesis. The chain is Phospholipid phosphatase 3 from Homo sapiens (Human).